The primary structure comprises 145 residues: MYPAHLLVLLAVCVSLLGATAIPPLPLNLVQFSNLIQCVNKGSRASYHYADYGCYCGAGGSGTPVDELDRCCKIHDDCYGEAEKMGCYPKWTLYTYDCSTEEPNCSTKTGCQGFVCACDLEAAKCFARSPYNNKNYNIDTSKRCK.

Residues Met-1 to Ala-21 form the signal peptide. A propeptide spanning residues Ile-22 to Leu-27 is cleaved from the precursor. Intrachain disulfides connect Cys-38–Cys-98, Cys-54–Cys-144, Cys-56–Cys-72, Cys-71–Cys-125, Cys-78–Cys-118, Cys-87–Cys-111, and Cys-105–Cys-116. Residues Tyr-55, Gly-57, and Gly-59 each coordinate Ca(2+). The active site involves His-75. Asp-76 contributes to the Ca(2+) binding site. The active site involves Asp-119.

It belongs to the phospholipase A2 family. Group I subfamily. D49 sub-subfamily. As to quaternary structure, monomer. Ca(2+) is required as a cofactor. In terms of tissue distribution, expressed by the venom gland.

The protein resides in the secreted. The enzyme catalyses a 1,2-diacyl-sn-glycero-3-phosphocholine + H2O = a 1-acyl-sn-glycero-3-phosphocholine + a fatty acid + H(+). Its function is as follows. PLA2 catalyzes the calcium-dependent hydrolysis of the 2-acyl groups in 3-sn-phosphoglycerides. This Laticauda semifasciata (Black-banded sea krait) protein is Acidic phospholipase A2 1.